The primary structure comprises 375 residues: Holliday junction branch migration complex subunit RuvB (375 aa).

Over residues 1–22 (MAIVSSKQSPQPDGSKKPSQAK) the composition is skewed to polar residues. Positions 1-44 (MAIVSSKQSPQPDGSKKPSQAKSVKKSVEHSKPQQTDALLQPEA) are disordered. The large ATPase domain (RuvB-L) stretch occupies residues 13–218 (DGSKKPSQAK…FGFVQRLRFY (206 aa)). Residues leucine 57, arginine 58, glycine 99, lysine 102, threonine 103, threonine 104, 165–167 (EDF), arginine 208, tyrosine 218, and arginine 255 each bind ATP. Residue threonine 103 coordinates Mg(2+). The interval 219-289 (EADELGQIVL…IAQEALELFN (71 aa)) is small ATPAse domain (RuvB-S). Residues 292–375 (PCGLDWTDRR…PPDEQMRLLS (84 aa)) form a head domain (RuvB-H) region. 2 residues coordinate DNA: arginine 347 and arginine 352.

Belongs to the RuvB family. Homohexamer. Forms an RuvA(8)-RuvB(12)-Holliday junction (HJ) complex. HJ DNA is sandwiched between 2 RuvA tetramers; dsDNA enters through RuvA and exits via RuvB. An RuvB hexamer assembles on each DNA strand where it exits the tetramer. Each RuvB hexamer is contacted by two RuvA subunits (via domain III) on 2 adjacent RuvB subunits; this complex drives branch migration. In the full resolvosome a probable DNA-RuvA(4)-RuvB(12)-RuvC(2) complex forms which resolves the HJ.

It is found in the cytoplasm. The enzyme catalyses ATP + H2O = ADP + phosphate + H(+). Its function is as follows. The RuvA-RuvB-RuvC complex processes Holliday junction (HJ) DNA during genetic recombination and DNA repair, while the RuvA-RuvB complex plays an important role in the rescue of blocked DNA replication forks via replication fork reversal (RFR). RuvA specifically binds to HJ cruciform DNA, conferring on it an open structure. The RuvB hexamer acts as an ATP-dependent pump, pulling dsDNA into and through the RuvAB complex. RuvB forms 2 homohexamers on either side of HJ DNA bound by 1 or 2 RuvA tetramers; 4 subunits per hexamer contact DNA at a time. Coordinated motions by a converter formed by DNA-disengaged RuvB subunits stimulates ATP hydrolysis and nucleotide exchange. Immobilization of the converter enables RuvB to convert the ATP-contained energy into a lever motion, pulling 2 nucleotides of DNA out of the RuvA tetramer per ATP hydrolyzed, thus driving DNA branch migration. The RuvB motors rotate together with the DNA substrate, which together with the progressing nucleotide cycle form the mechanistic basis for DNA recombination by continuous HJ branch migration. Branch migration allows RuvC to scan DNA until it finds its consensus sequence, where it cleaves and resolves cruciform DNA. This is Holliday junction branch migration complex subunit RuvB from Acaryochloris marina (strain MBIC 11017).